A 447-amino-acid chain; its full sequence is Argininosuccinate synthase (447 aa).

ATP contacts are provided by residues 17-25 and alanine 43; that span reads AFSGGLDTS. Residue tyrosine 99 participates in L-citrulline binding. The ATP site is built by glycine 129 and threonine 131. 3 residues coordinate L-aspartate: threonine 131, asparagine 135, and aspartate 136. Residue asparagine 135 coordinates L-citrulline. Aspartate 136 is an ATP binding site. L-citrulline contacts are provided by arginine 139 and serine 192. Residue aspartate 194 coordinates ATP. 3 residues coordinate L-citrulline: threonine 201, glutamate 203, and glutamate 280.

This sequence belongs to the argininosuccinate synthase family. Type 2 subfamily. In terms of assembly, homotetramer.

The protein resides in the cytoplasm. It carries out the reaction L-citrulline + L-aspartate + ATP = 2-(N(omega)-L-arginino)succinate + AMP + diphosphate + H(+). Its pathway is amino-acid biosynthesis; L-arginine biosynthesis; L-arginine from L-ornithine and carbamoyl phosphate: step 2/3. In Janthinobacterium sp. (strain Marseille) (Minibacterium massiliensis), this protein is Argininosuccinate synthase.